Reading from the N-terminus, the 575-residue chain is Dihydroxy-acid dehydratase (575 aa).

Positions 1–25 (MPTTDSARAADIKQPDIKPRSRDVT) are disordered. The segment covering 8-25 (RAADIKQPDIKPRSRDVT) has biased composition (basic and acidic residues). [2Fe-2S] cluster is bound at residue Cys-64. Mg(2+) is bound at residue Asp-96. Cys-137 provides a ligand contact to [2Fe-2S] cluster. Residues Asp-138 and Lys-139 each contribute to the Mg(2+) site. Lys-139 is modified (N6-carboxylysine). Cys-214 lines the [2Fe-2S] cluster pocket. Glu-465 is a Mg(2+) binding site. Ser-491 acts as the Proton acceptor in catalysis.

The protein belongs to the IlvD/Edd family. In terms of assembly, homodimer. [2Fe-2S] cluster is required as a cofactor. Mg(2+) serves as cofactor.

It catalyses the reaction (2R)-2,3-dihydroxy-3-methylbutanoate = 3-methyl-2-oxobutanoate + H2O. The enzyme catalyses (2R,3R)-2,3-dihydroxy-3-methylpentanoate = (S)-3-methyl-2-oxopentanoate + H2O. It participates in amino-acid biosynthesis; L-isoleucine biosynthesis; L-isoleucine from 2-oxobutanoate: step 3/4. It functions in the pathway amino-acid biosynthesis; L-valine biosynthesis; L-valine from pyruvate: step 3/4. Its function is as follows. Functions in the biosynthesis of branched-chain amino acids. Catalyzes the dehydration of (2R,3R)-2,3-dihydroxy-3-methylpentanoate (2,3-dihydroxy-3-methylvalerate) into 2-oxo-3-methylpentanoate (2-oxo-3-methylvalerate) and of (2R)-2,3-dihydroxy-3-methylbutanoate (2,3-dihydroxyisovalerate) into 2-oxo-3-methylbutanoate (2-oxoisovalerate), the penultimate precursor to L-isoleucine and L-valine, respectively. The protein is Dihydroxy-acid dehydratase of Mycobacterium avium (strain 104).